The sequence spans 206 residues: Large ribosomal subunit protein uL13z (206 aa).

Belongs to the universal ribosomal protein uL13 family.

In Arabidopsis thaliana (Mouse-ear cress), this protein is Large ribosomal subunit protein uL13z (RPL13AA).